Here is a 571-residue protein sequence, read N- to C-terminus: Calcium-dependent protein kinase 16 (571 aa).

Residues 1–74 (MGLCFSSAAK…TRHTPPHGKV (74 aa)) form a disordered region. G2 is lipidated: N-myristoyl glycine. C4 carries S-palmitoyl cysteine lipidation. Residues 63-72 (TPTRHTPPHG) show a composition bias toward basic residues. One can recognise a Protein kinase domain in the interval 108 to 368 (YTIGKLLGHG…AAQALSHPWV (261 aa)). Residues 114-122 (LGHGQFGYT) and K137 contribute to the ATP site. The active-site Proton acceptor is the D234. S274 carries the post-translational modification Phosphoserine. Positions 374 to 404 (ASEIPIDISVLNNMRQFVKFSRLKQFALRAL) are autoinhibitory domain. 4 EF-hand domains span residues 411–446 (EELA…DHPW), 448–483 (LKDA…VNQL), 490–525 (KWQQ…KGSI), and 528–555 (LLEE…ASIK). The Ca(2+) site is built by D424, D426, N428, E435, D461, N463, D465, E472, D503, D505, D507, E514, D533, D535, D537, and K539. Residue S541 is modified to Phosphoserine. E544 contributes to the Ca(2+) binding site.

This sequence belongs to the protein kinase superfamily. Ser/Thr protein kinase family. CDPK subfamily.

The protein resides in the cell membrane. Its subcellular location is the nucleus. The catalysed reaction is L-seryl-[protein] + ATP = O-phospho-L-seryl-[protein] + ADP + H(+). It carries out the reaction L-threonyl-[protein] + ATP = O-phospho-L-threonyl-[protein] + ADP + H(+). Its activity is regulated as follows. Activated by calcium. Autophosphorylation may play an important role in the regulation of the kinase activity. Functionally, may play a role in signal transduction pathways that involve calcium as a second messenger. This is Calcium-dependent protein kinase 16 (CPK16) from Arabidopsis thaliana (Mouse-ear cress).